A 501-amino-acid polypeptide reads, in one-letter code: Cytochrome P450 monooxygenase 76AD131 (501 aa).

Residues 1-21 traverse the membrane as a helical segment; sequence MGYYAIFAVVLPFLWTCFYLL. Residues Asn-115 and Asn-264 are each glycosylated (N-linked (GlcNAc...) asparagine). Cys-444 lines the heme pocket.

Belongs to the cytochrome P450 family. Heme serves as cofactor. In terms of tissue distribution, highly expressed in aerial parts, in both skin and flesh tissues.

Its subcellular location is the membrane. The catalysed reaction is tyramine + reduced [NADPH--hemoprotein reductase] + O2 = dopamine + oxidized [NADPH--hemoprotein reductase] + H2O + H(+). It carries out the reaction 3-methoxytyramine + reduced [NADPH--hemoprotein reductase] + O2 = 3,4-dihydroxy-5-methoxyphenethylamine + oxidized [NADPH--hemoprotein reductase] + H2O + H(+). Its pathway is aromatic compound metabolism. It participates in alkaloid biosynthesis. Functionally, cytochrome P450 monooxygenase participating in the biosynthesis of natural products derived from phenylethylamine, including mescaline, a natural hallucinogen potentially used in psychotherapeutic treatments. Catalyzes the hydroxylation of tyramine to dopamine and of 3-methoxytyramine to 3,4-dihydroxy-5-methoxyphenethylamine. The sequence is that of Cytochrome P450 monooxygenase 76AD131 from Lophophora williamsii (Peyote).